Here is a 618-residue protein sequence, read N- to C-terminus: Probable Xaa-Pro aminopeptidase P (618 aa).

Residues Asp414, Asp425, Glu523, and Glu537 each contribute to the Mn(2+) site.

It belongs to the peptidase M24B family. Mn(2+) is required as a cofactor.

The enzyme catalyses Release of any N-terminal amino acid, including proline, that is linked to proline, even from a dipeptide or tripeptide.. Catalyzes the removal of a penultimate prolyl residue from the N-termini of peptides. The chain is Probable Xaa-Pro aminopeptidase P (AMPP) from Metarhizium robertsii (strain ARSEF 23 / ATCC MYA-3075) (Metarhizium anisopliae (strain ARSEF 23)).